A 641-amino-acid chain; its full sequence is Chaperone protein DnaK (641 aa).

T200 bears the Phosphothreonine; by autocatalysis mark. Residues 605 to 623 (AAEQGGSADAASGNAQASK) are compositionally biased toward low complexity. A disordered region spans residues 605–628 (AAEQGGSADAASGNAQASKAADDV).

This sequence belongs to the heat shock protein 70 family.

Acts as a chaperone. The polypeptide is Chaperone protein DnaK (Xanthomonas oryzae pv. oryzae (strain KACC10331 / KXO85)).